The primary structure comprises 511 residues: Mannosyl-oligosaccharide alpha-1,2-mannosidase (511 aa).

The first 35 residues, methionine 1–lysine 35, serve as a signal peptide directing secretion. Asparagine 182 is a glycosylation site (N-linked (GlcNAc...) asparagine). Cysteine 332 and cysteine 361 are oxidised to a cystine. Asparagine 366 is a glycosylation site (N-linked (GlcNAc...) asparagine). The active-site Proton donor is the aspartate 375. Asparagine 438 carries an N-linked (GlcNAc...) asparagine glycan. Position 501 (threonine 501) interacts with Ca(2+).

The protein belongs to the glycosyl hydrolase 47 family. As to quaternary structure, homodimer. It depends on Ca(2+) as a cofactor.

It is found in the secreted. It catalyses the reaction N(4)-(alpha-D-Man-(1-&gt;2)-alpha-D-Man-(1-&gt;2)-alpha-D-Man-(1-&gt;3)-[alpha-D-Man-(1-&gt;2)-alpha-D-Man-(1-&gt;3)-[alpha-D-Man-(1-&gt;2)-alpha-D-Man-(1-&gt;6)]-alpha-D-Man-(1-&gt;6)]-beta-D-Man-(1-&gt;4)-beta-D-GlcNAc-(1-&gt;4)-beta-D-GlcNAc)-L-asparaginyl-[protein] (N-glucan mannose isomer 9A1,2,3B1,2,3) + 4 H2O = N(4)-(alpha-D-Man-(1-&gt;3)-[alpha-D-Man-(1-&gt;3)-[alpha-D-Man-(1-&gt;6)]-alpha-D-Man-(1-&gt;6)]-beta-D-Man-(1-&gt;4)-beta-D-GlcNAc-(1-&gt;4)-beta-D-GlcNAc)-L-asparaginyl-[protein] (N-glucan mannose isomer 5A1,2) + 4 beta-D-mannose. The enzyme catalyses N(4)-(alpha-D-Man-(1-&gt;2)-alpha-D-Man-(1-&gt;2)-alpha-D-Man-(1-&gt;3)-[alpha-D-Man-(1-&gt;3)-[alpha-D-Man-(1-&gt;2)-alpha-D-Man-(1-&gt;6)]-alpha-D-Man-(1-&gt;6)]-beta-D-Man-(1-&gt;4)-beta-D-GlcNAc-(1-&gt;4)-beta-D-GlcNAc)-L-asparaginyl-[protein] (N-glucan mannose isomer 8A1,2,3B1,3) + 3 H2O = N(4)-(alpha-D-Man-(1-&gt;3)-[alpha-D-Man-(1-&gt;3)-[alpha-D-Man-(1-&gt;6)]-alpha-D-Man-(1-&gt;6)]-beta-D-Man-(1-&gt;4)-beta-D-GlcNAc-(1-&gt;4)-beta-D-GlcNAc)-L-asparaginyl-[protein] (N-glucan mannose isomer 5A1,2) + 3 beta-D-mannose. It participates in protein modification; protein glycosylation. Its function is as follows. Involved in the maturation of Asn-linked oligosaccharides. Progressively trim alpha-1,2-linked mannose residues from Man(9)GlcNAc(2) to produce Man(5)GlcNAc(2). The polypeptide is Mannosyl-oligosaccharide alpha-1,2-mannosidase (MSDC) (Penicillium citrinum).